A 548-amino-acid polypeptide reads, in one-letter code: Membrane protein insertase YidC (548 aa).

A helical membrane pass occupies residues 6–26; the sequence is NLLVIALLFVSFMIWQAWEQD. Residues 28–56 form a disordered region; it reads NPQPQTQQTTQTTTTAAGSAADQGVPASG. Low complexity predominate over residues 29 to 42; that stretch reads PQPQTQQTTQTTTT. 4 helical membrane passes run 350–370, 424–444, 458–478, and 499–519; these read FVGNWGFSIIIITFIVRGIMY, FPLIIQMPIFLALYYMLMGSI, LSAQDPYYILPILMGVTMFFI, and PVIFTVFFLWFPSGLVLYYIV.

Belongs to the OXA1/ALB3/YidC family. Type 1 subfamily. As to quaternary structure, interacts with the Sec translocase complex via SecD. Specifically interacts with transmembrane segments of nascent integral membrane proteins during membrane integration.

The protein localises to the cell inner membrane. Functionally, required for the insertion and/or proper folding and/or complex formation of integral membrane proteins into the membrane. Involved in integration of membrane proteins that insert both dependently and independently of the Sec translocase complex, as well as at least some lipoproteins. Aids folding of multispanning membrane proteins. The protein is Membrane protein insertase YidC of Salmonella agona (strain SL483).